Consider the following 477-residue polypeptide: Glycogen synthase (477 aa).

Lys15 lines the ADP-alpha-D-glucose pocket.

It belongs to the glycosyltransferase 1 family. Bacterial/plant glycogen synthase subfamily.

The catalysed reaction is [(1-&gt;4)-alpha-D-glucosyl](n) + ADP-alpha-D-glucose = [(1-&gt;4)-alpha-D-glucosyl](n+1) + ADP + H(+). It functions in the pathway glycan biosynthesis; glycogen biosynthesis. Synthesizes alpha-1,4-glucan chains using ADP-glucose. The polypeptide is Glycogen synthase (Serratia proteamaculans (strain 568)).